A 97-amino-acid chain; its full sequence is Co-chaperonin GroES (97 aa).

The protein belongs to the GroES chaperonin family. As to quaternary structure, heptamer of 7 subunits arranged in a ring. Interacts with the chaperonin GroEL.

The protein localises to the cytoplasm. Together with the chaperonin GroEL, plays an essential role in assisting protein folding. The GroEL-GroES system forms a nano-cage that allows encapsulation of the non-native substrate proteins and provides a physical environment optimized to promote and accelerate protein folding. GroES binds to the apical surface of the GroEL ring, thereby capping the opening of the GroEL channel. The protein is Co-chaperonin GroES of Ectopseudomonas mendocina (strain ymp) (Pseudomonas mendocina).